The chain runs to 103 residues: Putative protein YmfH (103 aa).

Positions 1 to 34 are disordered; sequence MVNAAQRTRVKVEADNRPSVDTHPPGVQPSPGTG. Over residues 10-20 the composition is skewed to basic and acidic residues; the sequence is VKVEADNRPSV. A run of 2 helical transmembrane segments spans residues 42–62 and 73–93; these read MLCVVLAVPVFSLVLSGTALF and GLITRPILIAVATGALLCFVE.

The protein resides in the cell inner membrane. In Escherichia coli (strain K12), this protein is Putative protein YmfH (ymfH).